The following is a 582-amino-acid chain: uncharacterized protein (582 aa).

A helical transmembrane segment spans residues 20–40 (GFWALGLFGAAINAFSAVLIV).

The protein resides in the membrane. This is an uncharacterized protein from Mycoplasma pneumoniae (strain ATCC 29342 / M129 / Subtype 1) (Mycoplasmoides pneumoniae).